A 117-amino-acid polypeptide reads, in one-letter code: Gamma-aminobutyric acid receptor-associated protein-like 2 (117 aa).

Lys24 is subject to N6-acetyllysine. Ser39, Ser87, and Ser88 each carry phosphoserine. The Phosphatidylethanolamine amidated glycine; alternate moiety is linked to residue Gly116. Gly116 carries the Phosphatidylserine amidated glycine; alternate lipid modification. Residue Phe117 is a propeptide, removed in mature form.

Belongs to the ATG8 family. Monomer. Interacts with ATG3, ATG7, ATG13 and ULK1. Interacts with TP53INP1 and TP53INP2. Interacts with TBC1D25. Directly interacts with SQSTM1 and BNIP3. Interacts with TECPR2 and PCM1. Interacts with TBC1D5. Interacts with TRIM5. Interacts with MEFV and TRIM21. Interacts with WDFY3. Interacts with UBA5; promoting recruitment of UBA5 to the endoplasmic reticulum membrane. Interacts with GOSR1. Interacts with KBTBD6 and KBTBD7; the interaction is direct. Interacts with reticulophagy regulators RETREG1, RETREG2 and RETREG3. Interacts with IRGM. Interacts with DNM2. Interacts with NCOA4. Interacts with IRGQ. In terms of processing, the precursor molecule is cleaved by ATG4 (ATG4A, ATG4B, ATG4C or ATG4D) to expose the glycine at the C-terminus and form the cytosolic form, GABARAPL2-I. The processed form is then activated by APG7L/ATG7, transferred to ATG3 and conjugated to phosphatidylethanolamine (PE) phospholipid to form the membrane-bound form, GABARAPL2-II. During non-canonical autophagy, the processed form is conjugated to phosphatidylserine (PS) phospholipid. ATG4 proteins also mediate the delipidation of PE-conjugated forms required for GABARAPL2 recycling when autophagosomes fuse with lysosomes. In addition, ATG4B and ATG4D mediate delipidation of ATG8 proteins conjugated to PS during non-canonical autophagy. ATG4B constitutes the major protein for proteolytic activation. ATG4D is the main enzyme for delipidation activity. Post-translationally, phosphorylation at Ser-87 and Ser-88 by TBK1 prevents interaction with ATG4 (ATG4A, ATG4B, ATG4C or ATG4D). Phosphorylation by TBK1 on autophagosomes prevents their delipidation by ATG4 and premature removal from nascent autophagosomes. Ubiquitous. Expressed at high levels in the brain, heart, prostate, ovary, spleen and skeletal muscle. Expressed at very low levels in lung, thymus and small intestine.

It is found in the cytoplasmic vesicle. The protein resides in the autophagosome. Its subcellular location is the endoplasmic reticulum membrane. It localises to the golgi apparatus. In terms of biological role, ubiquitin-like modifier involved in intra-Golgi traffic. Modulates intra-Golgi transport through coupling between NSF activity and SNAREs activation. It first stimulates the ATPase activity of NSF which in turn stimulates the association with GOSR1. Involved in autophagy. Plays a role in mitophagy which contributes to regulate mitochondrial quantity and quality by eliminating the mitochondria to a basal level to fulfill cellular energy requirements and preventing excess ROS production. Whereas LC3s are involved in elongation of the phagophore membrane, the GABARAP/GATE-16 subfamily is essential for a later stage in autophagosome maturation. This Bos taurus (Bovine) protein is Gamma-aminobutyric acid receptor-associated protein-like 2.